We begin with the raw amino-acid sequence, 285 residues long: Tyrosine recombinase XerA (285 aa).

A Core-binding (CB) domain is found at 7–84 (IVNSDILEEF…ALKSYFKFEG (78 aa)). The Tyr recombinase domain occupies 100-274 (SLPKSLTEDE…TTKHLREAIE (175 aa)). Residues Arg-135, Lys-160, His-226, Arg-229, and His-252 contribute to the active site. The active-site O-(3'-phospho-DNA)-tyrosine intermediate is Tyr-261.

The protein belongs to the 'phage' integrase family. XerA subfamily.

The protein localises to the cytoplasm. Its function is as follows. Site-specific tyrosine recombinase, which acts by catalyzing the cutting and rejoining of the recombining DNA molecules. The chain is Tyrosine recombinase XerA from Pyrococcus horikoshii (strain ATCC 700860 / DSM 12428 / JCM 9974 / NBRC 100139 / OT-3).